The following is a 158-amino-acid chain: Transcription elongation factor GreA (158 aa).

It belongs to the GreA/GreB family.

Necessary for efficient RNA polymerase transcription elongation past template-encoded arresting sites. The arresting sites in DNA have the property of trapping a certain fraction of elongating RNA polymerases that pass through, resulting in locked ternary complexes. Cleavage of the nascent transcript by cleavage factors such as GreA or GreB allows the resumption of elongation from the new 3'terminus. GreA releases sequences of 2 to 3 nucleotides. This is Transcription elongation factor GreA from Rhizobium johnstonii (strain DSM 114642 / LMG 32736 / 3841) (Rhizobium leguminosarum bv. viciae).